The following is a 178-amino-acid chain: GTP-dependent dephospho-CoA kinase (178 aa).

Residues aspartate 48, isoleucine 49, aspartate 67, lysine 69, and glutamate 126 each coordinate GTP.

The protein belongs to the GTP-dependent DPCK family.

It carries out the reaction 3'-dephospho-CoA + GTP = GDP + CoA + H(+). The protein operates within cofactor biosynthesis; coenzyme A biosynthesis. Catalyzes the GTP-dependent phosphorylation of the 3'-hydroxyl group of dephosphocoenzyme A to form coenzyme A (CoA). The protein is GTP-dependent dephospho-CoA kinase of Methanothrix thermoacetophila (strain DSM 6194 / JCM 14653 / NBRC 101360 / PT) (Methanosaeta thermophila).